The following is a 149-amino-acid chain: Inner membrane protein YidI (149 aa).

Over 1–8 the chain is Cytoplasmic; sequence MGIIAQNK. Residues 9–31 form a helical membrane-spanning segment; sequence ISSLGMLFGAIALMMGIIHFSFG. At 32 to 77 the chain is on the periplasmic side; it reads PFSAPPPTFESIVADKTAEIKRGLLAGIKGEKITTVEKKEDVDVDK. A helical membrane pass occupies residues 78-97; sequence ILNQSGIALAIAALLCAFIG. The Cytoplasmic segment spans residues 98 to 117; sequence GMRKENRWGIRGALVFGGGT. The helical transmembrane segment at 118–140 threads the bilayer; it reads LAFHTLLFGIGIVCSILLIFLIF. Residues 141–149 are Periplasmic-facing; sequence SFLTGGSLV.

It is found in the cell inner membrane. In Escherichia coli (strain K12), this protein is Inner membrane protein YidI (yidI).